A 468-amino-acid polypeptide reads, in one-letter code: Hexokinase (468 aa).

One can recognise a Hexokinase domain in the interval 10–466 (AKQLAELEVV…SGKGAALIAD (457 aa)). Residues 74–225 (TGAEVGEAYA…NVPAVCKAIV (152 aa)) are hexokinase small subdomain. Position 85–90 (85–90 (DFGGST)) interacts with ATP. The segment at 163 to 189 (PVGFTFSFPCAQAALNSSFLIEWTKGF) is glucose-binding. Residues 226-455 (NDTVGTLVSC…KNIHYCIADD (230 aa)) are hexokinase large subdomain.

The protein belongs to the hexokinase family.

The enzyme catalyses a D-hexose + ATP = a D-hexose 6-phosphate + ADP + H(+). The catalysed reaction is D-mannose + ATP = D-mannose 6-phosphate + ADP + H(+). It carries out the reaction D-fructose + ATP = D-fructose 6-phosphate + ADP + H(+). It catalyses the reaction D-glucose + ATP = D-glucose 6-phosphate + ADP + H(+). The protein operates within carbohydrate metabolism; hexose metabolism. It functions in the pathway carbohydrate degradation; glycolysis; D-glyceraldehyde 3-phosphate and glycerone phosphate from D-glucose: step 1/4. Catalyzes the phosphorylation of various hexoses to hexose 6-phosphate. The protein is Hexokinase (HXK) of Toxoplasma gondii.